We begin with the raw amino-acid sequence, 522 residues long: Insulinoma-associated protein 1 (522 aa).

Positions 1 to 12 (MPRGFLVKRSKK) are enriched in basic residues. The SNAG domain stretch occupies residues 1-20 (MPRGFLVKRSKKSTPVSYRI). 2 disordered regions span residues 1–112 (MPRG…SREH) and 182–235 (AAEA…KPKA). A required and sufficient for interaction with KDM1A region spans residues 2–7 (PRGFLV). Residues 43–57 (PPAPGPGPVPGPLQP) form a necessary for interaction with CCND1 region. The segment covering 43–61 (PPAPGPGPVPGPLQPPPPT) has biased composition (pro residues). 2 stretches are compositionally biased toward low complexity: residues 66–75 (AALAAALACA) and 212–228 (ASAAAAAEPPAKVAKAP). Residues 277 to 297 (FICQLCKEEYADPFALAQHKC) form a C2H2-type 1; atypical zinc finger. Residues 305-327 (YRCPECAKVFSCPANLASHRRWH) form a C2H2-type 2 zinc finger. The interval 325–373 (RWHKPRPAPAAARACEPETPARAEAREATGGGGSDRDTPSPGGVSESGS) is disordered. A compositionally biased stretch (basic and acidic residues) spans 339 to 351 (CEPETPARAEARE). C2H2-type zinc fingers lie at residues 378–400 (YECHHCAKKFRRQAYLRKHLLAH), 453–476 (HLCPVCGETFPSKGAQERHLRLLH), and 481–504 (FPCKYCPATFYSSPGLTRHINKCH).

This sequence belongs to the INSM1 family. In terms of assembly, interacts (via the N-terminal region) with CCND1 (via cyclin N-terminal domain); the interaction competes with the binding of CCND1 to CDK4 during cell cycle progression and increases its transcriptional repressor activity. Interacts with HDAC3; the interaction increases its transcriptional repressor activity. Interacts (via the SNAG domain) with HDAC1. Interacts (via the SNAG domain) with HDAC2. Interacts (via the SNAG domain) with KDM1A. Interacts (via the SNAG domain) with RCOR1. Interacts with SORBS1.

The protein resides in the nucleus. Functionally, sequence-specific DNA-binding transcriptional regulator that plays a key role in neurogenesis and neuroendocrine cell differentiation during embryonic and/or fetal development. Binds to the consensus sequence 5'-[TG][TC][TC][TT][GA]GGG[CG]A-3' in target promoters. Acts as a transcriptional repressor of NEUROD1 and INS expression via its interaction with cyclin CCND1 in a cell cycle-independent manner. Negatively regulates skeletal muscle-specific gene expression in endocrine cells of the pituitary by inhibiting the Notch signaling pathway. Represses target gene transcription by recruiting chromatin-modifying factors, such as HDAC1, HDAC2, HDAC3, KDM1A and RCOR1 histone deacetylases. Binds to its own promoter, suggesting autoregulation as a self-control feedback mechanism. Competes with histone H3 for the same binding site on the histone demethylase complex formed by KDM1A and RCOR1, and thereby inhibits demethylation of histone H3 at 'Lys-4'. Promotes the generation and expansion of neuronal basal progenitor cells in the developing neocortex. Involved in the differentiation of endocrine cells of the developing anterior pituitary gland, of the pancreas and intestine, and of sympatho-adrenal cells in the peripheral nervous system. Promotes cell cycle signaling arrest and inhibition of cellular proliferation. The polypeptide is Insulinoma-associated protein 1 (INSM1) (Bos taurus (Bovine)).